We begin with the raw amino-acid sequence, 628 residues long: Alpha pinene synthase, chloroplastic (628 aa).

The transit peptide at 1–46 directs the protein to the chloroplast; the sequence is MSLGCITPLASAMVGPKLVRPLIHHNPLFHHKPLNRPYLQTKIPLR. Residues D381, D385, and E532 each contribute to the Mg(2+) site. Positions 381 to 385 match the DDXXD motif motif; it reads DDMYD.

It belongs to the terpene synthase family. Tpsa subfamily. Mg(2+) is required as a cofactor. Mn(2+) serves as cofactor.

It is found in the plastid. The protein localises to the chloroplast. The catalysed reaction is (2E)-geranyl diphosphate = alpha-pinene + diphosphate. It functions in the pathway secondary metabolite biosynthesis; terpenoid biosynthesis. Functionally, monoterpene synthase involved in the biosynthesis of volatile compounds. Mediates the conversion of (2E)-geranyl diphosphate (GPP) into alpha-pinene. This chain is Alpha pinene synthase, chloroplastic, found in Chamaecyparis formosensis (Formosan cypress).